Here is a 246-residue protein sequence, read N- to C-terminus: tRNA (guanine-N(1)-)-methyltransferase (246 aa).

Residues glycine 113 and 133–138 contribute to the S-adenosyl-L-methionine site; that span reads IGDFVM.

This sequence belongs to the RNA methyltransferase TrmD family. As to quaternary structure, homodimer.

The protein localises to the cytoplasm. The catalysed reaction is guanosine(37) in tRNA + S-adenosyl-L-methionine = N(1)-methylguanosine(37) in tRNA + S-adenosyl-L-homocysteine + H(+). Functionally, specifically methylates guanosine-37 in various tRNAs. This is tRNA (guanine-N(1)-)-methyltransferase from Vibrio atlanticus (strain LGP32) (Vibrio splendidus (strain Mel32)).